The chain runs to 417 residues: Serine hydroxymethyltransferase (417 aa).

Residues leucine 121 and glycine 125 to leucine 127 contribute to the (6S)-5,6,7,8-tetrahydrofolate site. The residue at position 229 (lysine 229) is an N6-(pyridoxal phosphate)lysine. Serine 355 to phenylalanine 357 provides a ligand contact to (6S)-5,6,7,8-tetrahydrofolate.

The protein belongs to the SHMT family. Homodimer. The cofactor is pyridoxal 5'-phosphate.

It localises to the cytoplasm. The catalysed reaction is (6R)-5,10-methylene-5,6,7,8-tetrahydrofolate + glycine + H2O = (6S)-5,6,7,8-tetrahydrofolate + L-serine. It participates in one-carbon metabolism; tetrahydrofolate interconversion. It functions in the pathway amino-acid biosynthesis; glycine biosynthesis; glycine from L-serine: step 1/1. In terms of biological role, catalyzes the reversible interconversion of serine and glycine with tetrahydrofolate (THF) serving as the one-carbon carrier. This reaction serves as the major source of one-carbon groups required for the biosynthesis of purines, thymidylate, methionine, and other important biomolecules. Also exhibits THF-independent aldolase activity toward beta-hydroxyamino acids, producing glycine and aldehydes, via a retro-aldol mechanism. The sequence is that of Serine hydroxymethyltransferase from Shewanella baltica (strain OS155 / ATCC BAA-1091).